A 555-amino-acid chain; its full sequence is Vacuolar fusion protein MON1 homolog A (555 aa).

Positions 1–12 (MAADMQRKRSSE) are enriched in basic and acidic residues. The interval 1-90 (MAADMQRKRS…PPLATDMRQI (90 aa)) is disordered. Ser31 and Ser56 each carry phosphoserine. Phosphothreonine is present on Thr61. Ser91 is modified (phosphoserine). The interval 112 to 149 (MLPGSSEDWPESPGAARRPATEPPRDGAGEGDEEEAAE) is disordered. Residues 130-139 (PATEPPRDGA) show a composition bias toward basic and acidic residues.

Belongs to the MON1/SAND family. As to quaternary structure, interacts with CCZ1. Found in a complex with RMC1, CCZ1, MON1A and MON1B. The MON1A-CCZ1B complex interacts with RIMOC1. The MON1A-CCZ1B complex interacts with RAB7A and this interaction is enhanced in the presence of RIMOC1.

Functionally, plays an important role in membrane trafficking through the secretory apparatus. Not involved in endocytic trafficking to lysosomes. Acts in concert with CCZ1, as a guanine exchange factor (GEF) for RAB7, promotes the exchange of GDP to GTP, converting it from an inactive GDP-bound form into an active GTP-bound form. This is Vacuolar fusion protein MON1 homolog A (MON1A) from Bos taurus (Bovine).